The primary structure comprises 318 residues: Porphobilinogen deaminase (318 aa).

C241 bears the S-(dipyrrolylmethanemethyl)cysteine mark.

Belongs to the HMBS family. As to quaternary structure, monomer. The cofactor is dipyrromethane.

It carries out the reaction 4 porphobilinogen + H2O = hydroxymethylbilane + 4 NH4(+). The protein operates within porphyrin-containing compound metabolism; protoporphyrin-IX biosynthesis; coproporphyrinogen-III from 5-aminolevulinate: step 2/4. Functionally, tetrapolymerization of the monopyrrole PBG into the hydroxymethylbilane pre-uroporphyrinogen in several discrete steps. The sequence is that of Porphobilinogen deaminase from Geobacter sp. (strain M21).